Here is a 435-residue protein sequence, read N- to C-terminus: Nuclear hormone receptor family member nhr-14 (435 aa).

The nuclear receptor DNA-binding region spans 17–92 (ADFCVVCGDK…DGMKPEAIQN (76 aa)). 2 consecutive NR C4-type zinc fingers follow at residues 20–40 (CVVCGDKAIGKHYGAVACNGC) and 56–80 (CRFNKQCNIDKDHRNACRYCRFQKC). Positions 91–126 (QNERDRIGSTKRRKRSGANSENNSDSEGTPSPKIEV) are disordered. Residues 107-119 (GANSENNSDSEGT) are compositionally biased toward polar residues. In terms of domain architecture, NR LBD spans 131–355 (VSRKLIEMLL…KRDTISPKIE (225 aa)).

Belongs to the nuclear hormone receptor family. Expressed in intestine and head neurons in young adults.

The protein resides in the nucleus. In terms of biological role, orphan nuclear receptor. Transcriptional repressor of intestinal metal transporter smf-3 and genes of the innate immune response. Inhibits nuclear localization of transcription factor pqm-1; in response to pathogen stress, may facilitate translocation of pqm-1, leading to transcriptional activation of genes involved in innate immunity and iron uptake. The polypeptide is Nuclear hormone receptor family member nhr-14 (nhr-14) (Caenorhabditis elegans).